A 224-amino-acid chain; its full sequence is Non-structural protein V (224 aa).

Positions 54–65 (QKNIQHPTASHQ) are enriched in polar residues. 2 disordered regions span residues 54–96 (QKNI…DPEP) and 150–171 (TEFK…GGHR). Residues His170, Cys189, Cys193, Cys205, Cys207, Cys210, Cys214, and Cys217 each coordinate Zn(2+).

This sequence belongs to the paramyxoviruses V protein family. In terms of assembly, interacts with host IFIH1/MDA5 and DHX58/LGP2. Forms with host DDB1, CUL4A, STAT1, STAT2 and STAT3 the mumps virus V-dependent complex (VDC).

The protein localises to the virion. It is found in the host cytoplasm. Plays an essential role in the inhibition of host immune response. Prevents the establishment of cellular antiviral state by blocking interferon-alpha/beta (IFN-alpha/beta) production and signaling pathway. Interacts with host IFIH1/MDA5 and DHX58/LGP2 to inhibit the transduction pathway involved in the activation of IFN-beta promoter, thus protecting the virus against cell antiviral state. Blocks the type I and II interferon signaling pathways by interacting with host STAT1, STAT2 and STAT3, and mediating their ubiquitination and subsequent proteasomal degradation. In Mumps virus (strain SBL) (MuV), this protein is Non-structural protein V.